A 157-amino-acid chain; its full sequence is Crossover junction endodeoxyribonuclease RuvC (157 aa).

Catalysis depends on residues Asp-9, Glu-70, and Asp-142. 3 residues coordinate Mg(2+): Asp-9, Glu-70, and Asp-142.

The protein belongs to the RuvC family. Homodimer which binds Holliday junction (HJ) DNA. The HJ becomes 2-fold symmetrical on binding to RuvC with unstacked arms; it has a different conformation from HJ DNA in complex with RuvA. In the full resolvosome a probable DNA-RuvA(4)-RuvB(12)-RuvC(2) complex forms which resolves the HJ. The cofactor is Mg(2+).

The protein resides in the cytoplasm. It catalyses the reaction Endonucleolytic cleavage at a junction such as a reciprocal single-stranded crossover between two homologous DNA duplexes (Holliday junction).. The RuvA-RuvB-RuvC complex processes Holliday junction (HJ) DNA during genetic recombination and DNA repair. Endonuclease that resolves HJ intermediates. Cleaves cruciform DNA by making single-stranded nicks across the HJ at symmetrical positions within the homologous arms, yielding a 5'-phosphate and a 3'-hydroxyl group; requires a central core of homology in the junction. The consensus cleavage sequence is 5'-(A/T)TT(C/G)-3'. Cleavage occurs on the 3'-side of the TT dinucleotide at the point of strand exchange. HJ branch migration catalyzed by RuvA-RuvB allows RuvC to scan DNA until it finds its consensus sequence, where it cleaves and resolves the cruciform DNA. The chain is Crossover junction endodeoxyribonuclease RuvC from Cyanothece sp. (strain PCC 7425 / ATCC 29141).